The following is a 947-amino-acid chain: Bifunctional glutamine synthetase adenylyltransferase/adenylyl-removing enzyme (947 aa).

The interval methionine 1 to glutamate 440 is adenylyl removase. The tract at residues serine 450–valine 947 is adenylyl transferase.

The protein belongs to the GlnE family. Mg(2+) is required as a cofactor.

The enzyme catalyses [glutamine synthetase]-O(4)-(5'-adenylyl)-L-tyrosine + phosphate = [glutamine synthetase]-L-tyrosine + ADP. It catalyses the reaction [glutamine synthetase]-L-tyrosine + ATP = [glutamine synthetase]-O(4)-(5'-adenylyl)-L-tyrosine + diphosphate. In terms of biological role, involved in the regulation of glutamine synthetase GlnA, a key enzyme in the process to assimilate ammonia. When cellular nitrogen levels are high, the C-terminal adenylyl transferase (AT) inactivates GlnA by covalent transfer of an adenylyl group from ATP to specific tyrosine residue of GlnA, thus reducing its activity. Conversely, when nitrogen levels are low, the N-terminal adenylyl removase (AR) activates GlnA by removing the adenylyl group by phosphorolysis, increasing its activity. The regulatory region of GlnE binds the signal transduction protein PII (GlnB) which indicates the nitrogen status of the cell. The protein is Bifunctional glutamine synthetase adenylyltransferase/adenylyl-removing enzyme of Salmonella arizonae (strain ATCC BAA-731 / CDC346-86 / RSK2980).